Consider the following 377-residue polypeptide: Caspase-4 (377 aa).

The interval 1 to 59 (MAEGNHRKKPLKVLESLGKDFLTGVLDNLVEQNVLNWKEEEKKKYYDAKTEDKVRVMAD) is required for LPS-binding. Positions 1-80 (MAEGNHRKKP…MLLQTFFNID (80 aa)) are excised as a propeptide. The region spanning 1–91 (MAEGNHRKKP…ISPNKKAHPN (91 aa)) is the CARD domain. Ala2 carries the N-acetylalanine modification. Ser83 carries the post-translational modification Phosphoserine. The segment at 84–104 (PNKKAHPNMEAGPPESGESTD) is disordered. Catalysis depends on residues His210 and Cys258. Residues 271–289 (SPASLEVASSQSSENLEED) constitute a propeptide that is removed on maturation. Position 314 is a (Microbial infection) ADP-riboxanated arginine (Arg314).

Belongs to the peptidase C14A family. As to quaternary structure, heterotetramer that consists of two anti-parallel arranged heterodimers, each one formed by a 20 kDa (Caspase-4 subunit p20) and a 10 kDa (Caspase-4 subunit p10) subunit. Upon direct LPS-binding, forms large homooligomers, resulting in its activation. These oligomers are often referred to as 'non-canonical inflammasomes'. In its precursor form, interacts with TMEM214; this interaction is required for association with the endoplasmic reticulum membrane. Interacts with CASP1. Interacts with NOD2. Interacts with SERPINB1; this interaction regulates CASP4 activity. Heterotetramer that consists of two anti-parallel arranged heterodimers, each one formed by a 20 kDa (Caspase-4 subunit p20) and a 10 kDa (Caspase-4 subunit p10) subunit. In terms of assembly, (Microbial infection) Interacts with NleF protein from pathogenic E.coli; this interaction leads to enzyme inhibition. As to quaternary structure, (Microbial infection) Interacts with cathepsin CTSG; the interaction is promoted by the Td92 surface protein of the periodontal pathogen T.denticola and leads to CASP4 activation. Post-translationally, in response to activation signals, undergoes autoproteolytic cleavage and activation. (Microbial infection) ADP-riboxanation by S.flexneri OspC3 blocks CASP4 autoprocessing, preventing CASP4 activation and ability to recognize and cleave GSDMD, thereby thwarting the inflammasome/pyroptosis-mediated defense. As to expression, widely expressed, including in keratinocytes and colonic and small intestinal epithelial cells (at protein level). Not detected in brain.

The protein localises to the cytoplasm. It is found in the cytosol. The protein resides in the endoplasmic reticulum membrane. It localises to the mitochondrion. Its subcellular location is the inflammasome. The protein localises to the secreted. It catalyses the reaction Strict requirement for Asp at the P1 position. It has a preferred cleavage sequence of Tyr-Val-Ala-Asp-|- but also cleaves at Asp-Glu-Val-Asp-|-.. Activated by homooligomerization induced by direct binding to cytosolic LPS, in a TLR4-independent manner. In addition to LPS, CASP4/CASP11 may also be activated by oxidized phospholipid 1-palmitoyl-2-arachidonoyl- sn-glycero-3-phosphorylcholine, an oxidized phospholipid (oxPAPC), in dendritic cells, promoting adaptive immunity. The role of oxPAPC is however unclear and another report suggests that oxPAPC competes with LPS-binding and inhibits the non-canonical inflammasome in macrophages. Functionally, inflammatory caspase that acts as the effector of the non-canonical inflammasome by mediating lipopolysaccharide (LPS)-induced pyroptosis. Also indirectly activates the NLRP3 and NLRP6 inflammasomes. Acts as a thiol protease that cleaves a tetrapeptide after an Asp residue at position P1: catalyzes cleavage of CGAS, GSDMD and IL18. Effector of the non-canonical inflammasome independently of NLRP3 inflammasome and CASP1: the non-canonical inflammasome promotes pyroptosis through GSDMD cleavage without involving secretion of cytokine IL1B. In the non-canonical inflammasome, CASP4 is activated by direct binding to the lipid A moiety of LPS without the need of an upstream sensor. LPS-binding promotes CASP4 activation and CASP4-mediated cleavage of GSDMD and IL18, followed by IL18 secretion through the GSDMD pore, pyroptosis of infected cells and their extrusion into the gut lumen. Also indirectly promotes secretion of mature cytokines (IL1A and HMGB1) downstream of GSDMD-mediated pyroptosis via activation of the NLRP3 and NLRP6 inflammasomes. Involved in NLRP3-dependent CASP1 activation and IL1B secretion in response to non-canonical activators, such as UVB radiation or cholera enterotoxin. Involved in NLRP6 inflammasome-dependent activation in response to lipoteichoic acid (LTA), a cell-wall component of Gram-positive bacteria, which leads to CASP1 activation and IL1B secretion. Involved in LPS-induced IL6 secretion; this activity may not require caspase enzymatic activity. The non-canonical inflammasome is required for innate immunity to cytosolic, but not vacuolar, bacteria. Plays a crucial role in the restriction of S.typhimurium replication in colonic epithelial cells during infection. Activation of the non-canonical inflammasome in brain endothelial cells can lead to excessive pyroptosis, leading to blood-brain barrier breakdown. Pyroptosis limits bacterial replication, while cytokine secretion promotes the recruitment and activation of immune cells and triggers mucosal inflammation. May also act as an activator of adaptive immunity in dendritic cells, following activation by oxidized phospholipid 1-palmitoyl-2-arachidonoyl- sn-glycero-3-phosphorylcholine, an oxidized phospholipid (oxPAPC). Involved in cell death induced by endoplasmic reticulum stress and by treatment with cytotoxic APP peptides found in Alzheimer's patient brains. Cleavage of GSDMD is not strictly dependent on the consensus cleavage site but depends on an exosite interface on CASP4 that recognizes and binds the Gasdermin-D, C-terminal (GSDMD-CT) part. Catalyzes cleavage and maturation of IL18; IL18 processing also depends of the exosite interface on CASP4. In contrast, it does not directly process IL1B. During non-canonical inflammasome activation, cuts CGAS and may play a role in the regulation of antiviral innate immune activation. Its function is as follows. (Microbial infection) In response to the Td92 surface protein of the periodontal pathogen T.denticola, activated by cathepsin CTSG which leads to production and secretion of IL1A and pyroptosis of gingival fibroblasts. The protein is Caspase-4 of Homo sapiens (Human).